Here is a 362-residue protein sequence, read N- to C-terminus: Histidinol-phosphate aminotransferase 1 (362 aa).

At lysine 226 the chain carries N6-(pyridoxal phosphate)lysine.

Belongs to the class-II pyridoxal-phosphate-dependent aminotransferase family. Histidinol-phosphate aminotransferase subfamily. In terms of assembly, homodimer. It depends on pyridoxal 5'-phosphate as a cofactor.

The catalysed reaction is L-histidinol phosphate + 2-oxoglutarate = 3-(imidazol-4-yl)-2-oxopropyl phosphate + L-glutamate. It functions in the pathway amino-acid biosynthesis; L-histidine biosynthesis; L-histidine from 5-phospho-alpha-D-ribose 1-diphosphate: step 7/9. This chain is Histidinol-phosphate aminotransferase 1, found in Dechloromonas aromatica (strain RCB).